Reading from the N-terminus, the 160-residue chain is uncharacterized protein (160 aa).

Residues Leu7–Asp151 form the N-acetyltransferase domain.

This is an uncharacterized protein from Bacillus velezensis (strain DSM 23117 / BGSC 10A6 / LMG 26770 / FZB42) (Bacillus amyloliquefaciens subsp. plantarum).